The sequence spans 675 residues: MAATLLRSLQRRNLSSSSVSAFRSLTGSTKTSYATHKLASLTRPFSSRPAGNDVIGIDLGTTNSCVSVMEGKNPKVIENSEGARTTPSVVAFNQKSELLVGTPAKRQAVTNPTNTLFGTKRLIGRRFDDAQTQKEMKMVPYKIVRAPNGDAWVEANGQQYSPSQIGAFVLTKIKETAEAYLGKTISKAVVTVPAYFNDAQRQATKDAGRIAGLDVQRIINEPTAAALSYGMNNKEGLIAVFDLGGGTFDVSILEISNGVFEVKATNGDTFLGGEDFDNALLDFLVSEFKRTESIDLAKDKLALQRLREAAEKAKIELSSTSQTEINLPFISADASGAKHLNITLTRSKFEALVNNLIERTKAPCKSCLKDANISIKDVDEVLLVGGMTRVPKVQQVVSEIFGKSPSKGVNPDEAVAMGAALQGGILRGDVKELLLLDVTPLSLGIETLGGIFTRLISRNTTIPTKKSQVFSTAADNQTQVGIKVLQGEREMAADNKSLGEFDLVGIPPAPRGLPQIEVTFDIDANGIVTVSAKDKSTGKEQQITIRSSGGLSDDEIDKMVKEAELHAQRDQERKALIDIRNSADTSIYSIEKSLAEYREKIPAEVAKEIEDAVSDLRTAMAGENADDIKAKLDAANKAVSKIGQHMSGGSSGGPSEGGSQGGEQAPEAEYEEVKK.

The N-terminal 52 residues, 1–52, are a transit peptide targeting the mitochondrion; it reads MAATLLRSLQRRNLSSSSVSAFRSLTGSTKTSYATHKLASLTRPFSSRPAGN. The disordered stretch occupies residues 639-675; sequence VSKIGQHMSGGSSGGPSEGGSQGGEQAPEAEYEEVKK. Gly residues predominate over residues 649 to 661; it reads GSSGGPSEGGSQG. Residues 666–675 are compositionally biased toward acidic residues; the sequence is PEAEYEEVKK.

This sequence belongs to the heat shock protein 70 family.

The protein resides in the mitochondrion. This is Heat shock 70 kDa protein, mitochondrial (HSP1) from Pisum sativum (Garden pea).